A 216-amino-acid polypeptide reads, in one-letter code: MKSNKLMALGIVFSIAVLIVIGTIAYSIINDKKDKGNEMFAYSTQQSLGKDDAPVKVVEFGDFKCPACRTWDVTVLPRLKEEYIDKGKVQLYFINFPFIGKDSDLGAAAGEAIYKQDKDSFWIFYDEIYQNQKKDTEEWITEDLLLSIVKEKLPKVDVEQFKKDLHSKDIKEKVSKDSDRAQKLKVQGAPSVYVNGNLANPDFDSMKKAIDKELKK.

Residues 1–25 (MKSNKLMALGIVFSIAVLIVIGTIA) form the signal peptide. Cys-65 and Cys-68 are oxidised to a cystine.

It belongs to the thioredoxin family. DsbA subfamily.

Its function is as follows. May be required for disulfide bond formation in some proteins. This Bacillus cereus (strain ATCC 14579 / DSM 31 / CCUG 7414 / JCM 2152 / NBRC 15305 / NCIMB 9373 / NCTC 2599 / NRRL B-3711) protein is Probable disulfide bond formation protein D (bdbD).